A 266-amino-acid polypeptide reads, in one-letter code: Non-structural maintenance of chromosomes element 1 homolog (266 aa).

The tract at residues 1 to 102 (MQGSTRRAGA…SVSKMATDFA (102 aa)) is interaction with NSMCE3. The segment at 191-232 (CNICHGLLIQGQSCETCGIRMHLPCVAKYFQSIPEPHCPHCN) adopts an RING-type; atypical zinc-finger fold. The tract at residues 246–266 (EKEREAGISKSSRKSLRTRQH) is disordered. Residues 256-266 (SSRKSLRTRQH) show a composition bias toward basic residues.

It belongs to the NSE1 family. Component of the SMC5-SMC6 complex which consists at least of SMC5, SMC6, NSMCE2, NSMCE1, NSMCE4A or EID3 and NSMCE3. NSMCE1, NSMCE4A or EID3 and NSMCE3 probably form a subcomplex that bridges the head domains of the SMC5-SMC6 heterodimer. Interacts with NSMCE3. Post-translationally, ubiquitinated.

It is found in the nucleus. Its subcellular location is the chromosome. The protein localises to the telomere. It catalyses the reaction S-ubiquitinyl-[E2 ubiquitin-conjugating enzyme]-L-cysteine + [acceptor protein]-L-lysine = [E2 ubiquitin-conjugating enzyme]-L-cysteine + N(6)-ubiquitinyl-[acceptor protein]-L-lysine.. Functionally, RING-type zinc finger-containing E3 ubiquitin ligase that assembles with melanoma antigen protein (MAGE) to catalyze the direct transfer of ubiquitin from E2 ubiquitin-conjugating enzyme to a specific substrate. Within MAGE-RING ubiquitin ligase complex, MAGE stimulates and specifies ubiquitin ligase activity likely through recruitment and/or stabilization of the E2 ubiquitin-conjugating enzyme at the E3:substrate complex. Involved in maintenance of genome integrity, DNA damage response and DNA repair. NSMCE3/MAGEG1 and NSMCE1 ubiquitin ligase are components of SMC5-SMC6 complex and may positively regulate homologous recombination-mediated DNA repair. The protein is Non-structural maintenance of chromosomes element 1 homolog (Nsmce1) of Mus musculus (Mouse).